The following is a 205-amino-acid chain: Rho-related protein racI (205 aa).

12–19 provides a ligand contact to GTP; that stretch reads GDSKTGKT. The Effector region signature appears at 34 to 42; it reads YVPSHVDAT. GTP-binding positions include 59-63 and 119-122; these read DSSAL and TKCD. Cysteine 202 carries the post-translational modification Cysteine methyl ester. A lipid anchor (S-geranylgeranyl cysteine) is attached at cysteine 202. Positions 203-205 are cleaved as a propeptide — removed in mature form; it reads IIQ.

Belongs to the small GTPase superfamily. Rho family.

It localises to the cell membrane. This chain is Rho-related protein racI (racI), found in Dictyostelium discoideum (Social amoeba).